We begin with the raw amino-acid sequence, 130 residues long: Large ribosomal subunit protein bL12 (130 aa).

It belongs to the bacterial ribosomal protein bL12 family. Homodimer. Part of the ribosomal stalk of the 50S ribosomal subunit. Forms a multimeric L10(L12)X complex, where L10 forms an elongated spine to which 2 to 4 L12 dimers bind in a sequential fashion. Binds GTP-bound translation factors.

Its function is as follows. Forms part of the ribosomal stalk which helps the ribosome interact with GTP-bound translation factors. Is thus essential for accurate translation. This is Large ribosomal subunit protein bL12 from Chlamydia trachomatis serovar L2 (strain ATCC VR-902B / DSM 19102 / 434/Bu).